A 468-amino-acid chain; its full sequence is Glutamate--tRNA ligase (468 aa).

Positions 8-18 (PSPTGFLHVGG) match the 'HIGH' region motif. C97, C99, C124, and D126 together coordinate Zn(2+). Positions 236 to 240 (KLSKR) match the 'KMSKS' region motif. Residue K239 coordinates ATP.

This sequence belongs to the class-I aminoacyl-tRNA synthetase family. Glutamate--tRNA ligase type 1 subfamily. Monomer. The cofactor is Zn(2+).

It is found in the cytoplasm. It carries out the reaction tRNA(Glu) + L-glutamate + ATP = L-glutamyl-tRNA(Glu) + AMP + diphosphate. Catalyzes the attachment of glutamate to tRNA(Glu) in a two-step reaction: glutamate is first activated by ATP to form Glu-AMP and then transferred to the acceptor end of tRNA(Glu). In Francisella tularensis subsp. tularensis (strain SCHU S4 / Schu 4), this protein is Glutamate--tRNA ligase.